Reading from the N-terminus, the 125-residue chain is Large ribosomal subunit protein bL12 (125 aa).

It belongs to the bacterial ribosomal protein bL12 family. Homodimer. Part of the ribosomal stalk of the 50S ribosomal subunit. Forms a multimeric L10(L12)X complex, where L10 forms an elongated spine to which 2 to 4 L12 dimers bind in a sequential fashion. Binds GTP-bound translation factors.

Forms part of the ribosomal stalk which helps the ribosome interact with GTP-bound translation factors. Is thus essential for accurate translation. The chain is Large ribosomal subunit protein bL12 from Rhizobium leguminosarum bv. trifolii (strain WSM2304).